Consider the following 28-residue polypeptide: Small spore coat assembly protein A (28 aa).

Residues 8-28 (GFALLVVLFILLIIVGAAYIY) traverse the membrane as a helical segment.

It belongs to the SscA family.

Its subcellular location is the spore coat. The protein localises to the membrane. Its function is as follows. Spore protein involved in the assembly of several components of the spore coat, including CotB, CotG and CotH, and in spore germination. This is Small spore coat assembly protein A from Bacillus subtilis (strain 168).